A 426-amino-acid polypeptide reads, in one-letter code: Glutamate-1-semialdehyde 2,1-aminomutase (426 aa).

Lys-265 carries the N6-(pyridoxal phosphate)lysine modification.

This sequence belongs to the class-III pyridoxal-phosphate-dependent aminotransferase family. HemL subfamily. As to quaternary structure, homodimer. The cofactor is pyridoxal 5'-phosphate.

The protein localises to the cytoplasm. It carries out the reaction (S)-4-amino-5-oxopentanoate = 5-aminolevulinate. It participates in porphyrin-containing compound metabolism; protoporphyrin-IX biosynthesis; 5-aminolevulinate from L-glutamyl-tRNA(Glu): step 2/2. This chain is Glutamate-1-semialdehyde 2,1-aminomutase, found in Klebsiella pneumoniae (strain 342).